The chain runs to 351 residues: Probable inactive tRNA-specific adenosine deaminase-like protein 3 (351 aa).

Methionine 1 is modified (N-acetylmethionine). A disordered region spans residues 1 to 26 (MEPAPGLVEQPKCLEAGSPEPEPAPW). One can recognise a CMP/dCMP-type deaminase domain in the interval 171 to 336 (AAMQSHMERA…PDLNHRFQVF (166 aa)). Zn(2+)-binding residues include histidine 223, cysteine 291, and cysteine 294.

Belongs to the cytidine and deoxycytidylate deaminase family. ADAT3 subfamily. Zn(2+) is required as a cofactor.

The sequence is that of Probable inactive tRNA-specific adenosine deaminase-like protein 3 (ADAT3) from Homo sapiens (Human).